The sequence spans 364 residues: Lipoyl synthase, mitochondrial (364 aa).

Positions 99, 104, 110, 130, 134, 137, and 345 each coordinate [4Fe-4S] cluster. Residues 116 to 334 form the Radical SAM core domain; that stretch reads HSTQTATIML…EQRGNELGFL (219 aa).

This sequence belongs to the radical SAM superfamily. Lipoyl synthase family. Requires [4Fe-4S] cluster as cofactor.

The protein localises to the mitochondrion. It catalyses the reaction [[Fe-S] cluster scaffold protein carrying a second [4Fe-4S](2+) cluster] + N(6)-octanoyl-L-lysyl-[protein] + 2 oxidized [2Fe-2S]-[ferredoxin] + 2 S-adenosyl-L-methionine + 4 H(+) = [[Fe-S] cluster scaffold protein] + N(6)-[(R)-dihydrolipoyl]-L-lysyl-[protein] + 4 Fe(3+) + 2 hydrogen sulfide + 2 5'-deoxyadenosine + 2 L-methionine + 2 reduced [2Fe-2S]-[ferredoxin]. The protein operates within protein modification; protein lipoylation via endogenous pathway; protein N(6)-(lipoyl)lysine from octanoyl-[acyl-carrier-protein]: step 2/2. In terms of biological role, catalyzes the radical-mediated insertion of two sulfur atoms into the C-6 and C-8 positions of the octanoyl moiety bound to the lipoyl domains of lipoate-dependent enzymes, thereby converting the octanoylated domains into lipoylated derivatives. This chain is Lipoyl synthase, mitochondrial, found in Drosophila mojavensis (Fruit fly).